A 613-amino-acid polypeptide reads, in one-letter code: 4-hydroxy-3-methylbut-2-en-1-yl diphosphate synthase (flavodoxin) (613 aa).

[4Fe-4S] cluster contacts are provided by Cys514, Cys517, Cys548, and Glu555.

This sequence belongs to the IspG family. The cofactor is [4Fe-4S] cluster.

It carries out the reaction (2E)-4-hydroxy-3-methylbut-2-enyl diphosphate + oxidized [flavodoxin] + H2O + 2 H(+) = 2-C-methyl-D-erythritol 2,4-cyclic diphosphate + reduced [flavodoxin]. The protein operates within isoprenoid biosynthesis; isopentenyl diphosphate biosynthesis via DXP pathway; isopentenyl diphosphate from 1-deoxy-D-xylulose 5-phosphate: step 5/6. Converts 2C-methyl-D-erythritol 2,4-cyclodiphosphate (ME-2,4cPP) into 1-hydroxy-2-methyl-2-(E)-butenyl 4-diphosphate. In Chlamydia pneumoniae (Chlamydophila pneumoniae), this protein is 4-hydroxy-3-methylbut-2-en-1-yl diphosphate synthase (flavodoxin).